A 464-amino-acid chain; its full sequence is ATP synthase subunit beta (464 aa).

Residue 153 to 160 (GGAGVGKT) coordinates ATP.

This sequence belongs to the ATPase alpha/beta chains family. F-type ATPases have 2 components, CF(1) - the catalytic core - and CF(0) - the membrane proton channel. CF(1) has five subunits: alpha(3), beta(3), gamma(1), delta(1), epsilon(1). CF(0) has three main subunits: a(1), b(2) and c(9-12). The alpha and beta chains form an alternating ring which encloses part of the gamma chain. CF(1) is attached to CF(0) by a central stalk formed by the gamma and epsilon chains, while a peripheral stalk is formed by the delta and b chains.

It localises to the cell inner membrane. It catalyses the reaction ATP + H2O + 4 H(+)(in) = ADP + phosphate + 5 H(+)(out). Its function is as follows. Produces ATP from ADP in the presence of a proton gradient across the membrane. The catalytic sites are hosted primarily by the beta subunits. This is ATP synthase subunit beta from Burkholderia vietnamiensis (strain G4 / LMG 22486) (Burkholderia cepacia (strain R1808)).